Reading from the N-terminus, the 176-residue chain is ATP synthase subunit delta (176 aa).

The protein belongs to the ATPase delta chain family. As to quaternary structure, F-type ATPases have 2 components, F(1) - the catalytic core - and F(0) - the membrane proton channel. F(1) has five subunits: alpha(3), beta(3), gamma(1), delta(1), epsilon(1). F(0) has three main subunits: a(1), b(2) and c(10-14). The alpha and beta chains form an alternating ring which encloses part of the gamma chain. F(1) is attached to F(0) by a central stalk formed by the gamma and epsilon chains, while a peripheral stalk is formed by the delta and b chains.

Its subcellular location is the cell inner membrane. In terms of biological role, f(1)F(0) ATP synthase produces ATP from ADP in the presence of a proton or sodium gradient. F-type ATPases consist of two structural domains, F(1) containing the extramembraneous catalytic core and F(0) containing the membrane proton channel, linked together by a central stalk and a peripheral stalk. During catalysis, ATP synthesis in the catalytic domain of F(1) is coupled via a rotary mechanism of the central stalk subunits to proton translocation. Functionally, this protein is part of the stalk that links CF(0) to CF(1). It either transmits conformational changes from CF(0) to CF(1) or is implicated in proton conduction. The sequence is that of ATP synthase subunit delta from Aliarcobacter butzleri (strain RM4018) (Arcobacter butzleri).